Reading from the N-terminus, the 458-residue chain is Protein adenylyltransferase FICD (458 aa).

The Cytoplasmic segment spans residues 1–23 (MILMPMASVVAVAEPKWVSVWGR). Residues 24-44 (FLWMALLSMALGSLLALLLPL) traverse the membrane as a helical; Signal-anchor for type II membrane protein segment. Residues 45–458 (GVVEEHCLAV…GFKETLPVRP (414 aa)) are Lumenal-facing. Threonine 80 is subject to O-AMP-threonine; by autocatalysis. 2 TPR repeats span residues 106-139 (AKAALNQALEMKRQGKRGKAHKLFLHALKMDPGF) and 140-173 (VDALNEFGIFSEEDKDIIQADYLYTRALTISPFH). Threonine 183 is subject to O-AMP-threonine; by autocatalysis. Residues 230 to 235 (TVAIEG) carry the Inhibitory (S/T)XXXE(G/N) motif motif. Residue glutamate 234 participates in ATP binding. N-linked (GlcNAc...) asparagine glycosylation is present at asparagine 275. The region spanning 285–420 (VTMDDMLEIH…VRPFIRFIAK (136 aa)) is the Fido domain. Position 316–319 (316–319 (VGHH)) interacts with ATP. Histidine 363 is a catalytic residue. ATP is bound by residues 367 to 374 (DGNGRTSR), 399 to 400 (YY), and asparagine 407.

It belongs to the fic family. Homodimer. Interacts with HD. Mg(2+) serves as cofactor. It depends on Mn(2+) as a cofactor. Auto-AMPylated in vitro.

The protein localises to the endoplasmic reticulum membrane. It carries out the reaction L-tyrosyl-[protein] + ATP = O-(5'-adenylyl)-L-tyrosyl-[protein] + diphosphate. It catalyses the reaction 3-O-(5'-adenylyl)-L-threonyl-[protein] + H2O = L-threonyl-[protein] + AMP + H(+). The enzyme catalyses L-threonyl-[protein] + ATP = 3-O-(5'-adenylyl)-L-threonyl-[protein] + diphosphate. Its activity is regulated as follows. The side chain of Glu-234 determines which of the two opposing activities (AMPylase or de-AMPylase) will take place. In response to endoplasmic reticulum stress, mediates de-AMPylase activity. Adenylyltransferase activity is inhibited by the inhibitory helix present at the N-terminus: Glu-234 binds ATP and competes with ATP-binding at Arg-374, thereby preventing adenylyltransferase activity. In unstressed cells, disengagement of Glu-234 promotes adenylyltransferase activity. Activation dissociates ATP-binding from Glu-234, allowing ordered binding of the entire ATP moiety with the alpha-phosphate in an orientation that is productive for accepting an incoming target hydroxyl side chain. Protein that can both mediate the addition of adenosine 5'-monophosphate (AMP) to specific residues of target proteins (AMPylation), and the removal of the same modification from target proteins (de-AMPylation), depending on the context. The side chain of Glu-231 determines which of the two opposing activities (AMPylase or de-AMPylase) will take place. Acts as a key regulator of the ERN1/IRE1-mediated unfolded protein response (UPR) by mediating AMPylation or de-AMPylation of HSPA5/BiP. In unstressed cells, acts as an adenylyltransferase by mediating AMPylation of HSPA5/BiP at 'Thr-518', thereby inactivating it. In response to endoplasmic reticulum stress, acts as a phosphodiesterase by mediating removal of ATP (de-AMPylation) from HSPA5/BiP at 'Thr-518', leading to restore HSPA5/BiP activity. Although it is able to AMPylate RhoA, Rac and Cdc42 Rho GTPases in vitro, Rho GTPases do not constitute physiological substrates. This is Protein adenylyltransferase FICD from Mus musculus (Mouse).